The following is a 456-amino-acid chain: Glutathione reductase (456 aa).

Residues Ser14, Gly15, Glu34, Thr41, Cys42, and Lys50 each contribute to the FAD site. Ser14 serves as a coordination point for glutathione. A disulfide bond links Cys42 and Cys47. Tyr99 provides a ligand contact to glutathione. An FAD-binding site is contributed by Gly115. NADP(+) is bound by residues Ala180, Ile183, Glu186, Arg203, Arg209, and Gly267. Residue Asp308 coordinates FAD. Residue Glu315 coordinates NADP(+). Thr317 is a binding site for FAD. Glutathione is bound at residue Arg325. Residue Val348 participates in NADP(+) binding. FAD is bound at residue His445. His445 acts as the Proton acceptor in catalysis.

Belongs to the class-I pyridine nucleotide-disulfide oxidoreductase family. Homodimer. It depends on FAD as a cofactor.

It is found in the cytoplasm. The catalysed reaction is 2 glutathione + NADP(+) = glutathione disulfide + NADPH + H(+). Functionally, catalyzes the reduction of glutathione disulfide (GSSG) to reduced glutathione (GSH). Constitutes the major mechanism to maintain a high GSH:GSSG ratio in the cytosol. This Haemophilus influenzae (strain ATCC 51907 / DSM 11121 / KW20 / Rd) protein is Glutathione reductase (gor).